A 371-amino-acid polypeptide reads, in one-letter code: Succinyl-diaminopimelate desuccinylase (371 aa).

Histidine 68 lines the Zn(2+) pocket. Residue aspartate 70 is part of the active site. Zn(2+) is bound at residue aspartate 99. Glutamate 130 (proton acceptor) is an active-site residue. Zn(2+) contacts are provided by glutamate 131, glutamate 159, and histidine 344.

The protein belongs to the peptidase M20A family. DapE subfamily. As to quaternary structure, homodimer. It depends on Zn(2+) as a cofactor. Requires Co(2+) as cofactor.

It carries out the reaction N-succinyl-(2S,6S)-2,6-diaminopimelate + H2O = (2S,6S)-2,6-diaminopimelate + succinate. It participates in amino-acid biosynthesis; L-lysine biosynthesis via DAP pathway; LL-2,6-diaminopimelate from (S)-tetrahydrodipicolinate (succinylase route): step 3/3. Catalyzes the hydrolysis of N-succinyl-L,L-diaminopimelic acid (SDAP), forming succinate and LL-2,6-diaminopimelate (DAP), an intermediate involved in the bacterial biosynthesis of lysine and meso-diaminopimelic acid, an essential component of bacterial cell walls. The chain is Succinyl-diaminopimelate desuccinylase from Acidiphilium cryptum (strain JF-5).